Here is a 1117-residue protein sequence, read N- to C-terminus: Leucine-rich repeats and immunoglobulin-like domains protein 3 (1117 aa).

Residues 1–24 (MGAPGLRAATAALGLLLCAGLGRA) form the signal peptide. The 37-residue stretch at 38–74 (LLDDDAQRPCPAACHCLGDLLDCSRRRLVRLPDPLPA) folds into the LRRNT domain. LRR repeat units lie at residues 75–98 (WVTR…SHLQ), 99–120 (SLQE…GSIS), 122–143 (NIRQ…QLEA), 146–168 (SLET…PPLQ), 169–189 (LKYL…YFDN), 193–214 (TLLV…MFKL), 216–237 (QLQH…TFQG), 240–261 (ALKS…AFWG), 264–285 (NMEV…WLYG), 288–309 (MLRE…AWEF), 312–333 (KLSE…SFLG), 336–357 (LLNA…AFRG), 360–382 (SLKT…SGAF), 387–408 (RLRQ…AFAG), and 411–432 (TLEH…AFSQ). Asn156 carries N-linked (GlcNAc...) asparagine glycosylation. Asn274 is a glycosylation site (N-linked (GlcNAc...) asparagine). Residues Asn442 and Asn469 are each glycosylated (N-linked (GlcNAc...) asparagine). In terms of domain architecture, LRRCT spans 444–495 (SSLLCDCQLRWLPQWVAENNFQSFVNASCAHPQLLKGRSIFTVSPDGFVCDD). 3 consecutive Ig-like C2-type domains span residues 499-598 (PQIT…AKLT), 603-692 (PSFT…ATLT), and 697-783 (PSFL…VRLS). 2 disulfide bridges follow: Cys520–Cys581 and Cys624–Cys676. N-linked (GlcNAc...) asparagine glycans are attached at residues Asn688 and Asn729. Cysteines 718 and 767 form a disulfide. A helical membrane pass occupies residues 810 to 830 (VVIIAVVCCVVGTSLVWVVII). N-linked (GlcNAc...) asparagine glycosylation occurs at Asn1014. The interval 1019 to 1093 (DFSTGPEPGS…KERTDFREEN (75 aa)) is disordered. Basic and acidic residues predominate over residues 1083–1093 (DKERTDFREEN).

As to quaternary structure, interacts with EGFR, ERBB2 and ERBB4 (in vitro). As to expression, widely expressed.

It localises to the cell membrane. It is found in the cytoplasmic vesicle membrane. Its function is as follows. Plays a role in craniofacial and inner ear morphogenesis during embryonic development. Acts within the otic vesicle epithelium to control formation of the lateral semicircular canal in the inner ear, possibly by restricting the expression of NTN1. This is Leucine-rich repeats and immunoglobulin-like domains protein 3 (Lrig3) from Mus musculus (Mouse).